The sequence spans 489 residues: Betaine aldehyde dehydrogenase (489 aa).

K(+) is bound by residues threonine 26 and aspartate 93. 150-152 (GAW) provides a ligand contact to NAD(+). Lysine 162 acts as the Charge relay system in catalysis. NAD(+) is bound at residue 176–179 (KPSE). Valine 180 provides a ligand contact to K(+). 229–232 (GVET) is a binding site for NAD(+). Leucine 245 contributes to the K(+) binding site. Glutamate 251 serves as the catalytic Proton acceptor. 3 residues coordinate NAD(+): glycine 253, cysteine 285, and glutamate 386. The Nucleophile role is filled by cysteine 285. Cysteine 285 carries the post-translational modification Cysteine sulfenic acid (-SOH). Residues lysine 456 and glycine 459 each contribute to the K(+) site. Glutamate 463 serves as the catalytic Charge relay system.

It belongs to the aldehyde dehydrogenase family. As to quaternary structure, dimer of dimers. Requires K(+) as cofactor.

The catalysed reaction is betaine aldehyde + NAD(+) + H2O = glycine betaine + NADH + 2 H(+). It participates in amine and polyamine biosynthesis; betaine biosynthesis via choline pathway; betaine from betaine aldehyde: step 1/1. Its function is as follows. Involved in the biosynthesis of the osmoprotectant glycine betaine. Catalyzes the irreversible oxidation of betaine aldehyde to the corresponding acid. The chain is Betaine aldehyde dehydrogenase from Burkholderia pseudomallei (strain 668).